The following is a 93-amino-acid chain: Small ribosomal subunit protein uS19c (93 aa).

The protein belongs to the universal ribosomal protein uS19 family.

The protein resides in the plastid. It localises to the chloroplast. Protein S19 forms a complex with S13 that binds strongly to the 16S ribosomal RNA. In Brachypodium distachyon (Purple false brome), this protein is Small ribosomal subunit protein uS19c.